We begin with the raw amino-acid sequence, 107 residues long: Phosphoribosyl-ATP pyrophosphatase (107 aa).

The protein belongs to the PRA-PH family.

It is found in the cytoplasm. The catalysed reaction is 1-(5-phospho-beta-D-ribosyl)-ATP + H2O = 1-(5-phospho-beta-D-ribosyl)-5'-AMP + diphosphate + H(+). It functions in the pathway amino-acid biosynthesis; L-histidine biosynthesis; L-histidine from 5-phospho-alpha-D-ribose 1-diphosphate: step 2/9. In Mesorhizobium japonicum (strain LMG 29417 / CECT 9101 / MAFF 303099) (Mesorhizobium loti (strain MAFF 303099)), this protein is Phosphoribosyl-ATP pyrophosphatase (hisE).